Reading from the N-terminus, the 496-residue chain is MELTLTTSLGLAVFVFILFKLLTGSKSTKNSLPEAWRLPIIGHMHHLVGTLPHRGVTDMARKYGSLMHLQLGEVSTIVVSSPRWAKEVLTTYDITFANRPETLTGEIVAYHNTDIVLSPYGEYWRQLRKLCTLELLSAKKVKSFQSLREEECWNLVKEVRSSGSGSPVDLSESIFKLIATILSRAAFGKGIKDQREFTEIVKEILRLTGGFDVADIFPSKKILHHLSGKRAKLTNIHNKLDSLINNIVSEHPGSRTSSSQESLLDVLLRLKDSAELPLTSDNVKAVILDMFGAGTDTSSATIEWAISELIRCPRAMEKVQTELRQALNGKERIQEEDIQELSYLKLVIKETLRLHPPLPLVMPRECREPCVLAGYEIPTKTKLIVNVFAINRDPEYWKDAETFMPERFENSPINIMGSEYEYLPFGAGRRMCPGAALGLANVELPLAHILYYFNWKLPNGARLDELDMSECFGATVQRKSELLLVPTAYKTANNSA.

Residues 1 to 2 (ME) are Cytoplasmic-facing. A helical; Signal-anchor for type II membrane protein membrane pass occupies residues 3-23 (LTLTTSLGLAVFVFILFKLLT). The Lumenal segment spans residues 24–496 (GSKSTKNSLP…TAYKTANNSA (473 aa)). Residue Cys-432 coordinates heme. N-linked (GlcNAc...) asparagine glycosylation is present at Asn-493.

This sequence belongs to the cytochrome P450 family. Heme serves as cofactor.

It is found in the endoplasmic reticulum membrane. The enzyme catalyses (+)-(R)-germacrene A + 3 reduced [NADPH--hemoprotein reductase] + 3 O2 = germacra-1(10),4,11(13)-trien-12-oate + 3 oxidized [NADPH--hemoprotein reductase] + 4 H2O + 4 H(+). Its pathway is secondary metabolite biosynthesis; terpenoid biosynthesis. Functionally, involved in the biosynthesis of germacrene-derived sesquiterpene lactones. Catalyzes three consecutive oxidations of germacrene A to produce germacrene A acid. Could also catalyze the three-step oxidation of non-natural substrate amorphadiene to artemisinic acid. In Barnadesia spinosa (Spiny barnadesia), this protein is Germacrene A hydroxylase.